The primary structure comprises 175 residues: Large ribosomal subunit protein uL10 (175 aa).

The protein belongs to the universal ribosomal protein uL10 family. As to quaternary structure, part of the ribosomal stalk of the 50S ribosomal subunit. The N-terminus interacts with L11 and the large rRNA to form the base of the stalk. The C-terminus forms an elongated spine to which L12 dimers bind in a sequential fashion forming a multimeric L10(L12)X complex.

Forms part of the ribosomal stalk, playing a central role in the interaction of the ribosome with GTP-bound translation factors. In Psychrobacter arcticus (strain DSM 17307 / VKM B-2377 / 273-4), this protein is Large ribosomal subunit protein uL10.